A 157-amino-acid polypeptide reads, in one-letter code: Transcriptional repressor NrdR (157 aa).

A zinc finger lies at 3 to 34 (CPFCGHMESQVKDSRPSEDGAAIRRRRLCPEC). The ATP-cone domain maps to 49 to 139 (LTIVKRSGRR…VYRDFRETSD (91 aa)).

Belongs to the NrdR family. It depends on Zn(2+) as a cofactor.

In terms of biological role, negatively regulates transcription of bacterial ribonucleotide reductase nrd genes and operons by binding to NrdR-boxes. In Caulobacter sp. (strain K31), this protein is Transcriptional repressor NrdR.